We begin with the raw amino-acid sequence, 105 residues long: uncharacterized protein (105 aa).

Residues Gly-41–Phe-62 traverse the membrane as a helical segment.

It is found in the membrane. This is an uncharacterized protein from Saccharomyces cerevisiae (strain ATCC 204508 / S288c) (Baker's yeast).